The chain runs to 208 residues: Probable thymidylate kinase (208 aa).

9-16 (GIDGAGKS) contacts ATP.

Belongs to the thymidylate kinase family.

It catalyses the reaction dTMP + ATP = dTDP + ADP. This chain is Probable thymidylate kinase, found in Thermococcus gammatolerans (strain DSM 15229 / JCM 11827 / EJ3).